The sequence spans 448 residues: Extracellular serine protease (448 aa).

An N-terminal signal peptide occupies residues 1–20 (MKLSHLSLAIISAITLAACG). The segment at 87–109 (KELENQASDDEVDPTKTGVVGNL) is disordered.

The protein belongs to the peptidase S17 family. The cofactor is a divalent metal cation.

This enzyme is a chymotrypsin-like serine protease. Degrades a variety of substrates present in the skin and hoof of the sheep, including elastin, keratin, fibrinogen and collagen. It seems to play an important role in the pathogenesis of sheep footrot. The polypeptide is Extracellular serine protease (prvA) (Dichelobacter nodosus (Bacteroides nodosus)).